Consider the following 535-residue polypeptide: Inositol 1,4,5-trisphosphate receptor-interacting protein-like 2 (535 aa).

Residues methionine 1–serine 32 form the signal peptide. Residues serine 33 to glycine 43 lie on the Extracellular side of the membrane. Residues alanine 44–leucine 64 traverse the membrane as a helical segment. Topologically, residues arginine 65–proline 535 are cytoplasmic. Serine 139 is modified (phosphoserine).

Belongs to the ITPRIP family.

Its subcellular location is the membrane. The polypeptide is Inositol 1,4,5-trisphosphate receptor-interacting protein-like 2 (Itpripl2) (Mus musculus (Mouse)).